A 276-amino-acid polypeptide reads, in one-letter code: Diaminopimelate epimerase (276 aa).

N13, Q46, and N66 together coordinate substrate. The active-site Proton donor is C75. Substrate contacts are provided by residues 76 to 77 (GN), N159, N192, and 210 to 211 (ER). Residue C219 is the Proton acceptor of the active site. Residue 220–221 (GS) coordinates substrate.

Belongs to the diaminopimelate epimerase family. Homodimer.

The protein resides in the cytoplasm. It carries out the reaction (2S,6S)-2,6-diaminopimelate = meso-2,6-diaminopimelate. It functions in the pathway amino-acid biosynthesis; L-lysine biosynthesis via DAP pathway; DL-2,6-diaminopimelate from LL-2,6-diaminopimelate: step 1/1. In terms of biological role, catalyzes the stereoinversion of LL-2,6-diaminopimelate (L,L-DAP) to meso-diaminopimelate (meso-DAP), a precursor of L-lysine and an essential component of the bacterial peptidoglycan. This chain is Diaminopimelate epimerase, found in Vibrio vulnificus (strain CMCP6).